The primary structure comprises 38 residues: Photosystem II reaction center protein M (38 aa).

Residues 5–25 (ILGLIATALFIVIPTSFLLIL) traverse the membrane as a helical segment.

Belongs to the PsbM family. As to quaternary structure, PSII is composed of 1 copy each of membrane proteins PsbA, PsbB, PsbC, PsbD, PsbE, PsbF, PsbH, PsbI, PsbJ, PsbK, PsbL, PsbM, PsbT, PsbX, PsbY, PsbZ, Psb30/Ycf12, at least 3 peripheral proteins of the oxygen-evolving complex and a large number of cofactors. It forms dimeric complexes.

The protein resides in the plastid. Its subcellular location is the cyanelle thylakoid membrane. Its function is as follows. One of the components of the core complex of photosystem II (PSII). PSII is a light-driven water:plastoquinone oxidoreductase that uses light energy to abstract electrons from H(2)O, generating O(2) and a proton gradient subsequently used for ATP formation. It consists of a core antenna complex that captures photons, and an electron transfer chain that converts photonic excitation into a charge separation. This subunit is found at the monomer-monomer interface. This chain is Photosystem II reaction center protein M, found in Cyanophora paradoxa.